Here is a 104-residue protein sequence, read N- to C-terminus: Large ribosomal subunit protein bL21 (104 aa).

Belongs to the bacterial ribosomal protein bL21 family. As to quaternary structure, part of the 50S ribosomal subunit. Contacts protein L20.

Its function is as follows. This protein binds to 23S rRNA in the presence of protein L20. The chain is Large ribosomal subunit protein bL21 from Tropheryma whipplei (strain Twist) (Whipple's bacillus).